The sequence spans 683 residues: Acetyl-coenzyme A synthetase 2 (683 aa).

CoA contacts are provided by residues 206-209 (RGGK) and T325. ATP contacts are provided by residues 401–403 (GEP) and 425–430 (DTMWQT). 425 to 430 (DTMWQT) provides a ligand contact to AMP. Residue K506 forms a Glycyl lysine isopeptide (Lys-Gly) (interchain with G-Cter in ubiquitin) linkage. The ATP site is built by D516 and R531. Residues D516 and R531 each coordinate AMP. Position 539 (S539) interacts with CoA. ATP is bound at residue R542. R612 contacts CoA. S679 carries the post-translational modification Phosphoserine.

Belongs to the ATP-dependent AMP-binding enzyme family.

It localises to the cytoplasm. The protein localises to the nucleus. It catalyses the reaction acetate + ATP + CoA = acetyl-CoA + AMP + diphosphate. It participates in carbohydrate metabolism; pyruvate metabolism. In terms of biological role, catalyzes the production of acetyl-CoA. Provides the acetyl-CoA source for histone acetylation in the nucleus. 'Anaerobic' isozyme of acetyl-coenzyme A synthetase, which is required for growth on fermentable carbon sources such as glucose. May be involved in the PDH (pyruvate dehydrogenase complex) bypass. The polypeptide is Acetyl-coenzyme A synthetase 2 (Saccharomyces cerevisiae (strain ATCC 204508 / S288c) (Baker's yeast)).